A 485-amino-acid chain; its full sequence is Palmitoyltransferase ZDHHC1 (485 aa).

Positions methionine 1–arginine 41 are disordered. The Cytoplasmic portion of the chain corresponds to methionine 1–glutamine 52. The interval methionine 1–leucine 271 is mediates interaction with STING1. Residues isoleucine 53–leucine 73 traverse the membrane as a helical segment. The Lumenal segment spans residues leucine 74–histidine 77. The helical transmembrane segment at tryptophan 78 to leucine 98 threads the bilayer. Topologically, residues threonine 99–serine 185 are cytoplasmic. The region spanning leucine 134 to alanine 184 is the DHHC domain. The S-palmitoyl cysteine intermediate role is filled by cysteine 164. The helical transmembrane segment at alanine 186–valine 206 threads the bilayer. Topologically, residues asparagine 207–proline 241 are lumenal. A helical transmembrane segment spans residues alanine 242–glycine 262. Residues histidine 263–serine 485 lie on the Cytoplasmic side of the membrane. Disordered stretches follow at residues glutamate 324 to valine 358 and leucine 462 to serine 485. Residues tryptophan 475–serine 485 show a composition bias toward basic residues.

The protein belongs to the DHHC palmitoyltransferase family. In terms of assembly, interacts with STING1; ZDHHC1 constitutively interacts with STING1 and in presence of DNA viruses activates it by promoting its cGAMP-induced oligomerization and the recruitment of downstream signaling components. As to expression, widely expressed with significant expression in heart, brain, placenta, lung, liver, kidney, testis, thymus and small intestine. Expressed at lower levels in adult pancreas and lung.

Its subcellular location is the endosome membrane. It is found in the endoplasmic reticulum membrane. The protein resides in the golgi apparatus. It carries out the reaction L-cysteinyl-[protein] + hexadecanoyl-CoA = S-hexadecanoyl-L-cysteinyl-[protein] + CoA. Functionally, palmitoyltransferase that catalyzes the addition of palmitate onto various protein substrates, such as NCDN and NLRP3. Has a palmitoyltransferase activity toward NCDN and regulates NCDN association with endosome membranes through this palmitoylation. Acts as an activator of the NLRP3 inflammasome by mediating palmitoylation of 'Cys-130' and 'Cys-958' of NLRP3, thereby promoting NLRP3 phosphorylation and activation by NEK7. Its function is as follows. Also has a palmitoyltransferase activity-independent function in DNA virus-triggered and CGAS-mediated innate immune response. Functions as an activator of STING1 by promoting its cGAMP-induced oligomerization and the recruitment of downstream signaling components. The polypeptide is Palmitoyltransferase ZDHHC1 (Homo sapiens (Human)).